The following is a 102-amino-acid chain: MSEKSVEAAAELSAKDLKEKKEKVEEKASRKERKKEVVEEEENGAEEEEEETAEDGEEEDEGEEEDEEEEEEDDEGPALKRAAEEEDEADPKRQKTENGASA.

The segment at Met1 to Ala102 is disordered. Ser2 carries the post-translational modification N-acetylserine. Ser2 bears the Phosphoserine mark. An N6-acetyllysine modification is found at Lys4. Phosphoserine occurs at positions 5 and 13. The segment covering Ser13–Val37 has biased composition (basic and acidic residues). Lys15 is subject to N6-acetyllysine. Residues Val38–Gly76 are compositionally biased toward acidic residues. Residue Thr52 is modified to Phosphothreonine. Lys92 is subject to N6-acetyllysine.

It belongs to the pro/parathymosin family.

Its function is as follows. Parathymosin may mediate immune function by blocking the effect of prothymosin alpha which confers resistance to certain opportunistic infections. The sequence is that of Parathymosin (PTMS) from Homo sapiens (Human).